The chain runs to 772 residues: Acyl-homoserine lactone acylase PvdQ (772 aa).

The N-terminal stretch at 1–28 (MPVFPFCRPMTCAGLAAALVAFSVGVQA) is a signal peptide. The propeptide at 199-220 (AQSSAGFASALARQERFAAERG) is spacer peptide. Ser221 functions as the Nucleophile in the catalytic mechanism.

The protein belongs to the peptidase S45 family. As to quaternary structure, heterodimer of an alpha subunit and a beta subunit processed from the same precursor.

The protein resides in the periplasm. It catalyses the reaction an N-acyl-L-homoserine lactone + H2O = L-homoserine lactone + a carboxylate. Functionally, catalyzes the deacylation of acyl-homoserine lactone (AHL or acyl-HSL), releasing homoserine lactone (HSL) and the corresponding fatty acid. Possesses a specificity for the degradation of long-chain acyl-HSLs (side chains of 11 to 14 carbons in length). In Pseudomonas putida (strain ATCC 47054 / DSM 6125 / CFBP 8728 / NCIMB 11950 / KT2440), this protein is Acyl-homoserine lactone acylase PvdQ (pvdQ).